Reading from the N-terminus, the 160-residue chain is Photosystem II extrinsic protein V (160 aa).

The first 25 residues, 1–25 (MKRFFLVAIASVLFFFNTMVGSANA), serve as a signal peptide directing secretion. Heme c is bound by residues Cys-62, Cys-65, His-66, and His-117.

The protein belongs to the cytochrome c family. PsbV subfamily. As to quaternary structure, PSII is composed of 1 copy each of membrane proteins PsbA, PsbB, PsbC, PsbD, PsbE, PsbF, PsbH, PsbI, PsbJ, PsbK, PsbL, PsbM, PsbT, PsbX, PsbY, PsbZ, Psb30/Ycf12, peripheral proteins PsbO, CyanoQ (PsbQ), PsbU, PsbV and a large number of cofactors. It forms dimeric complexes. The cyanobacterial oxygen-evolving complex is composed of PsbO, CyanoQ (PsbQ), PsbV and PsbU. Heme c is required as a cofactor.

It is found in the cellular thylakoid membrane. In terms of biological role, one of the extrinsic, lumenal subunits of photosystem II (PSII). PSII is a light-driven water plastoquinone oxidoreductase, using light energy to abstract electrons from H(2)O, generating a proton gradient subsequently used for ATP formation. The extrinsic proteins stabilize the structure of photosystem II oxygen-evolving complex (OEC), the ion environment of oxygen evolution and protect the OEC against heat-induced inactivation. Low-potential cytochrome c that plays a role in the OEC of PSII, required for normal function or stabilization of PSII. This Synechocystis sp. (strain ATCC 27184 / PCC 6803 / Kazusa) protein is Photosystem II extrinsic protein V.